A 215-amino-acid chain; its full sequence is Adenylate kinase (215 aa).

10-15 lines the ATP pocket; that stretch reads GAGKGT. An NMP region spans residues 30–59; sequence STGDMFRLAIKEGTELGKKAKEFMDQGDLV. AMP contacts are provided by residues Thr31, Arg36, 57-59, 85-88, and Gln92; these read DLV and GFPR. An LID region spans residues 126 to 163; it reads GRRICPTCGTAYHVVYNPPKEEGICDKDGSQLIQRDDD. Arg127 serves as a coordination point for ATP. Zn(2+) contacts are provided by Cys130, Cys133, Cys150, and Asp153. Residues Arg160 and Arg171 each contribute to the AMP site. Arg199 is a binding site for ATP.

Belongs to the adenylate kinase family. As to quaternary structure, monomer.

Its subcellular location is the cytoplasm. It catalyses the reaction AMP + ATP = 2 ADP. Its pathway is purine metabolism; AMP biosynthesis via salvage pathway; AMP from ADP: step 1/1. In terms of biological role, catalyzes the reversible transfer of the terminal phosphate group between ATP and AMP. Plays an important role in cellular energy homeostasis and in adenine nucleotide metabolism. The chain is Adenylate kinase from Oceanobacillus iheyensis (strain DSM 14371 / CIP 107618 / JCM 11309 / KCTC 3954 / HTE831).